A 571-amino-acid polypeptide reads, in one-letter code: MRRAAMYEEGPPPSYESVVSAAPVAAALGSPFDAPLDPPFVPPRYLRPTGGRNSIRYSELAPLFDTTRVYLVDNKSTDVASLNYQNDHSNFLTTVIQNNDYSPGEASTQTINLDDRSHWGGDLKTILHTNMPNVNEFMFTNKFKARVMVSRLPTKDNQVELKYEWVEFTLPEGNYSETMTIDLMNNAIVEHYLKVGRQNGVLESDIGVKFDTRNFRLGFDPVTGLVMPGVYTNEAFHPDIILLPGCGVDFTHSRLSNLLGIRKRQPFQEGFRITYDDLEGGNIPALLDVDAYQASLKDDTEQGGGGAGGSNSSGSGAEENSNAAAAAMQPVEDMNDHAIRGDTFATRAEEKRAEAEAAAEAAAPAAQPEVEKPQKKPVIKPLTEDSKKRSYNLISNDSTFTQYRSWYLAYNYGDPQTGIRSWTLLCTPDVTCGSEQVYWSLPDMMQDPVTFRSTRQISNFPVVGAELLPVHSKSFYNDQAVYSQLIRQFTSLTHVFNRFPENQILARPPAPTITTVSENVPALTDHGTLPLRNSIGGVQRVTITDARRRTCPYVYKALGIVSPRVLSSRTF.

The tract at residues 297–325 (KDDTEQGGGGAGGSNSSGSGAEENSNAAA) is disordered. Gly residues predominate over residues 302 to 311 (QGGGGAGGSN). A compositionally biased stretch (low complexity) spans 312 to 325 (SSGSGAEENSNAAA). Positions 340 to 342 (RGD) match the Cell attachment site motif. The disordered stretch occupies residues 347 to 383 (RAEEKRAEAEAAAEAAAPAAQPEVEKPQKKPVIKPLT). The span at 356–368 (EAAAEAAAPAAQP) shows a compositional bias: low complexity.

Belongs to the adenoviridae penton family. In terms of assembly, interacts (via the cell attachment site RGD) with host heterodimer ITGAV-ITGB5; this interaction promotes virus internalization. Interacts with host WWP1 and WWP2. Interacts with the fiber protein (via N-terminal tail region). Interacts with the capsid vertex protein; this interaction binds the penton base to neighboring peripentonal hexons.

The protein localises to the virion. It is found in the host nucleus. In terms of biological role, major capsid protein that self-associates to form penton base pentamers, each in the shape of a pentagon, situated at the 12 vertices of the pseudo T=25 capsid. Involved in virus secondary attachment to host cell after initial attachment by the fiber protein. Binds host integrin heterodimer ITGAV-ITGB5 (alphaV-beta5) thereby triggering clathrin-mediated endocytosis of virions. Mediates initial virus attachment to CXADR-negative cells. Binding to integrins ITGAV-ITGB5 also seems to induce macropinocytosis uptake of the virus. As the virus enters the host cell, penton proteins are shed concomitant with virion acidification in the endosome. The polypeptide is Penton protein (Homo sapiens (Human)).